We begin with the raw amino-acid sequence, 144 residues long: Prefoldin subunit alpha (144 aa).

This sequence belongs to the prefoldin subunit alpha family. As to quaternary structure, heterohexamer of two alpha and four beta subunits.

The protein resides in the cytoplasm. Functionally, molecular chaperone capable of stabilizing a range of proteins. Seems to fulfill an ATP-independent, HSP70-like function in archaeal de novo protein folding. In Methanococcus maripaludis (strain DSM 14266 / JCM 13030 / NBRC 101832 / S2 / LL), this protein is Prefoldin subunit alpha.